We begin with the raw amino-acid sequence, 495 residues long: Histidine--tRNA ligase (495 aa).

This sequence belongs to the class-II aminoacyl-tRNA synthetase family. As to quaternary structure, homodimer.

It is found in the cytoplasm. The enzyme catalyses tRNA(His) + L-histidine + ATP = L-histidyl-tRNA(His) + AMP + diphosphate + H(+). This chain is Histidine--tRNA ligase, found in Ruegeria pomeroyi (strain ATCC 700808 / DSM 15171 / DSS-3) (Silicibacter pomeroyi).